A 78-amino-acid chain; its full sequence is Large ribosomal subunit protein bL28 (78 aa).

Residues 1 to 20 form a disordered region; the sequence is MSRVCQVTGKGPVTGNNISH.

This sequence belongs to the bacterial ribosomal protein bL28 family.

In Stutzerimonas stutzeri (strain A1501) (Pseudomonas stutzeri), this protein is Large ribosomal subunit protein bL28.